Reading from the N-terminus, the 179-residue chain is Translation initiation factor IF-3 (179 aa).

Belongs to the IF-3 family. As to quaternary structure, monomer.

It localises to the cytoplasm. Its function is as follows. IF-3 binds to the 30S ribosomal subunit and shifts the equilibrium between 70S ribosomes and their 50S and 30S subunits in favor of the free subunits, thus enhancing the availability of 30S subunits on which protein synthesis initiation begins. The protein is Translation initiation factor IF-3 of Proteus hauseri.